A 476-amino-acid polypeptide reads, in one-letter code: UDP-glucose 6-dehydrogenase (476 aa).

NAD(+)-binding positions include 7 to 12, Asp-32, Arg-37, 85 to 89, 126 to 127, and Glu-161; these read GAGYVG, VNTPT, and ST. Substrate contacts are provided by residues 157–161, 216–220, Arg-256, and 263–269; these read EFLAE, KLAAN, and QASVGFG. The active-site Nucleophile is the Cys-272. An NAD(+)-binding site is contributed by 272–275; the sequence is CFQK. 334–335 is a substrate binding site; it reads FK. Arg-342 provides a ligand contact to NAD(+). Arg-439 serves as a coordination point for substrate.

The protein belongs to the UDP-glucose/GDP-mannose dehydrogenase family.

It carries out the reaction UDP-alpha-D-glucose + 2 NAD(+) + H2O = UDP-alpha-D-glucuronate + 2 NADH + 3 H(+). Its pathway is nucleotide-sugar biosynthesis; UDP-alpha-D-glucuronate biosynthesis; UDP-alpha-D-glucuronate from UDP-alpha-D-glucose: step 1/1. Its function is as follows. Involved in the biosynthesis of glycosaminoglycans; hyaluronan, chondroitin sulfate and heparan sulfate. Required for wingless signaling in different tissues. This is UDP-glucose 6-dehydrogenase (sgl) from Drosophila melanogaster (Fruit fly).